Reading from the N-terminus, the 312-residue chain is Probable myosin light chain kinase DDB_G0282429 (312 aa).

The interval 1–28 (MDRMDSSDEEIDNISDDELQSGDEIEVE) is disordered. The segment covering 7–27 (SDEEIDNISDDELQSGDEIEV) has biased composition (acidic residues). Residues 38–290 (YILGNEIGRG…FEQCLIHPWV (253 aa)) enclose the Protein kinase domain. Residues 44–52 (IGRGAFSIV) and Lys67 each bind ATP. Asp158 (proton acceptor) is an active-site residue.

It belongs to the protein kinase superfamily. CAMK Ser/Thr protein kinase family. CaMK subfamily.

It carries out the reaction L-seryl-[myosin light chain] + ATP = O-phospho-L-seryl-[myosin light chain] + ADP + H(+). The catalysed reaction is L-threonyl-[myosin light chain] + ATP = O-phospho-L-threonyl-[myosin light chain] + ADP + H(+). Its activity is regulated as follows. Does not have a calmodulin-binding domain. Its function is as follows. May phosphorylate a specific serine in the N-terminus of a myosin light chain. This Dictyostelium discoideum (Social amoeba) protein is Probable myosin light chain kinase DDB_G0282429.